We begin with the raw amino-acid sequence, 443 residues long: 26S proteasome regulatory subunit 4 homolog A (443 aa).

Disordered regions lie at residues 1–55 (MGQG…LPTV) and 87–108 (RLKPQEEKAEEDRSKVDDLRGT). Composition is skewed to basic and acidic residues over residues 12–28 (QGDRKPDGGDKKEKKFE) and 87–106 (RLKPQEEKAEEDRSKVDDLR). An ATP-binding site is contributed by 229-236 (GEPGTGKT). Residues Lys-296 and Lys-433 each participate in a glycyl lysine isopeptide (Lys-Gly) (interchain with G-Cter in ubiquitin) cross-link.

The protein belongs to the AAA ATPase family. Component of the 19S regulatory particle (RP/PA700) base subcomplex of the 26S proteasome. The 26S proteasome is composed of a core protease (CP), known as the 20S proteasome, capped at one or both ends by the 19S regulatory particle (RP/PA700). The RP/PA700 complex is composed of at least 17 different subunits in two subcomplexes, the base and the lid, which form the portions proximal and distal to the 20S proteolytic core, respectively. Required for innate immunity. Interacts with UNI. Preferentially expressed in the root and shoot apical meristem.

Its subcellular location is the cytoplasm. It is found in the P-body. The protein resides in the nucleus. Functionally, the 26S protease is involved in the ATP-dependent degradation of ubiquitinated proteins. The regulatory (or ATPase) complex confers ATP dependency and substrate specificity to the 26S complex. Interacts with transit peptides of proteins targeted to the chloroplast, and may be involved in the degradation of unimported plastid protein precursors. Is required for the maintenance of postembryonic root and shoot meristems. Has a specific role in the regulation of organs size. Acts redundantly with RPT2B in the regulation of gametogenesis. With RPT2B plays a critical role in 26S proteasome assembly. Acts as an upstream signaling component for inducing both defense and morphological phenotypes in the constitutive active uni-1D mutant. Acts as a negative regulator of endoreduplication in trichome cells. May function after the completion of the third endoreduplication step (8C to 16C) mediated by RHL1. Acts as a negative regulator of transcriptional gene silencing (TGS) at specific endogenous genes through DNA methylation. Promotes post-transcriptional gene silencing (PTGS) by limiting the degradation of transgene aberrant RNAs by the RNA quality control (RQC) machinery, thus favoring their entry into cytoplasmic siRNA bodies where they can trigger PTGS. Involved in tolerance to zinc deficiency, possibly through alleviation of oxidative stresses or processing of poly-ubiquitinated proteins. Required for resistance to the fungal pathogen Golovinomyces cichoracearum. This chain is 26S proteasome regulatory subunit 4 homolog A, found in Arabidopsis thaliana (Mouse-ear cress).